A 662-amino-acid chain; its full sequence is Protein-arginine deiminase type-1 (662 aa).

14 residues coordinate Ca(2+): Asn-153, Asp-155, Asp-157, Asp-164, Asp-175, Asp-178, Gln-350, Glu-352, Lys-363, Asp-370, Ser-371, Asn-374, Phe-408, and Leu-411. Catalysis depends on Cys-644, which acts as the Nucleophile.

The protein belongs to the protein arginine deiminase family. In terms of assembly, monomer. Ca(2+) is required as a cofactor. Expressed only in the epidermis and uterus.

Its subcellular location is the cytoplasm. It carries out the reaction L-arginyl-[protein] + H2O = L-citrullyl-[protein] + NH4(+). Catalyzes the deimination of arginine residues of proteins. The sequence is that of Protein-arginine deiminase type-1 (Padi1) from Mus musculus (Mouse).